The chain runs to 810 residues: Phenylalanine--tRNA ligase beta subunit (810 aa).

Positions 39–150 (RSWAAGVVLG…LDLPSGSPVG (112 aa)) constitute a tRNA-binding domain. In terms of domain architecture, B5 spans 407–495 (RGEAIINLRL…RLYGYDHFCE (89 aa)). The Mg(2+) site is built by D473, D479, E482, and E483. In terms of domain architecture, FDX-ACB spans 716-809 (SPYPAVARDL…LTKQFAVSLR (94 aa)).

Belongs to the phenylalanyl-tRNA synthetase beta subunit family. Type 1 subfamily. As to quaternary structure, tetramer of two alpha and two beta subunits. The cofactor is Mg(2+).

The protein resides in the cytoplasm. It catalyses the reaction tRNA(Phe) + L-phenylalanine + ATP = L-phenylalanyl-tRNA(Phe) + AMP + diphosphate + H(+). This Synechocystis sp. (strain ATCC 27184 / PCC 6803 / Kazusa) protein is Phenylalanine--tRNA ligase beta subunit (pheT).